The following is a 392-amino-acid chain: Stilbene synthase 6 (392 aa).

55–58 (KFNR) contacts substrate. C164 is an active-site residue. Substrate-binding positions include L267 and 305–307 (GGP).

It belongs to the thiolase-like superfamily. Chalcone/stilbene synthases family. Homodimer.

Its subcellular location is the cytoplasm. The catalysed reaction is 4-coumaroyl-CoA + 3 malonyl-CoA + 3 H(+) = trans-resveratrol + 4 CO2 + 4 CoA. It functions in the pathway phytoalexin biosynthesis; 3,4',5-trihydroxystilbene biosynthesis; 3,4',5-trihydroxystilbene from trans-4-coumarate: step 2/2. In terms of biological role, mediates resistance to pathogens which are sensitive to stilbenes. This chain is Stilbene synthase 6 (STS), found in Vitis vinifera (Grape).